A 283-amino-acid polypeptide reads, in one-letter code: MNDSILLGLIGQGLDLSRTPAMHEAEGLAQGRATVYRRIDTLGSRASGQDLKTLLDAALYLGFNGLNITHPYKQAVLPLLDEVSEQATQLGAVNTVVIDATGHTTGHNTDVSGFGRGMEEGLPNAKLDSVVQVGAGGVGNAVAYALVTHGVQKLQVADLDTSRAQALADVINNAVGREAVVGVDARGIEDVIAAADGVVNATPMGMPAHPGTAFDVSCLTKDHWVGDVVYMPIETELLKAARALGCETLDGTRMAIHQAVDAFRLFTGLEPDVSRMRETFLSL.

Shikimate contacts are provided by Ser17, Thr69, Lys73, Asn94, and Asp110. Residues 17–19 (SRT), Thr69, Lys73, Asn94, and Asp110 contribute to the L-quinate site. The Proton acceptor role is filled by Lys73. NAD(+)-binding positions include 137-138 (GV), Asp158, Arg163, 203-206 (PMGM), Ala213, Val228, and Gly251. Gln258 contacts shikimate. Gln258 is an L-quinate binding site.

It belongs to the shikimate dehydrogenase family. In terms of assembly, homodimer.

The enzyme catalyses L-quinate + NAD(+) = 3-dehydroquinate + NADH + H(+). It catalyses the reaction shikimate + NAD(+) = 3-dehydroshikimate + NADH + H(+). Its pathway is metabolic intermediate biosynthesis; chorismate biosynthesis; chorismate from D-erythrose 4-phosphate and phosphoenolpyruvate: step 4/7. The protein operates within aromatic compound metabolism; 3,4-dihydroxybenzoate biosynthesis; 3-dehydroquinate from D-quinate (NAD(+) route). Functionally, involved in the biosynthesis of the chorismate, which leads to the biosynthesis of aromatic amino acids, and plays a key role in the quinate degradation pathway. Catalyzes the NAD(+)-dependent oxidation of both quinate and shikimate to 3-dehydroquinate and 3-dehydroshikimate, respectively. It can only use NAD. The protein is Quinate/shikimate dehydrogenase (NAD(+)) of Corynebacterium glutamicum (strain ATCC 13032 / DSM 20300 / JCM 1318 / BCRC 11384 / CCUG 27702 / LMG 3730 / NBRC 12168 / NCIMB 10025 / NRRL B-2784 / 534).